Here is an 808-residue protein sequence, read N- to C-terminus: Protein Ac66 (808 aa).

Residues 132–141 (PFSTPPPTQP) are compositionally biased toward pro residues. A disordered region spans residues 132-151 (PFSTPPPTQPPESNVAGVGG).

Interacts with the putative E3 ligase IE0 and with viral ubiquitin/vUbi.

The protein localises to the host nucleus. The protein resides in the host cytoplasm. Plays an essential role in the efficient egress of nucleocapsids from the host nucleus to the cytoplasm. This chain is Protein Ac66 (Ac66), found in Lepidoptera (butterflies and moths).